Here is a 293-residue protein sequence, read N- to C-terminus: NAD kinase (293 aa).

Residue D74 is the Proton acceptor of the active site. NAD(+) contacts are provided by residues 74-75, R79, 148-149, R176, D178, 189-194, and Q248; these read DG, NE, and TAYALS.

The protein belongs to the NAD kinase family. The cofactor is a divalent metal cation.

Its subcellular location is the cytoplasm. It catalyses the reaction NAD(+) + ATP = ADP + NADP(+) + H(+). Involved in the regulation of the intracellular balance of NAD and NADP, and is a key enzyme in the biosynthesis of NADP. Catalyzes specifically the phosphorylation on 2'-hydroxyl of the adenosine moiety of NAD to yield NADP. In Blochmanniella floridana, this protein is NAD kinase.